Consider the following 274-residue polypeptide: MNSKNYHQKKRFGQHWLVNKKILEKIKEIAVLNENDFILEIGPGKGALTAKLLDSKIKKLHAVELDNDLINLLNDKFNNNDKFSLQHGDILSVNLDSINKKITKVIANIPYNITGPILDIFIGRLGIIRNCNYEKIIFLMQKDVVDRILSKEGSPNAGALSIRMQLLSKIKKICDVPPSSFSPPPKVFSSLVVFEPINDNLRLDISLEKYIDKLLRISFNSRRKMLRNTLNSILSNEEMNELSESSKVCFKLRPQDISINQWIKLAENCIKIKK.

S-adenosyl-L-methionine is bound by residues His-15, Leu-17, Gly-42, Glu-64, Asp-89, and Asn-108.

This sequence belongs to the class I-like SAM-binding methyltransferase superfamily. rRNA adenine N(6)-methyltransferase family. RsmA subfamily.

Its subcellular location is the cytoplasm. It catalyses the reaction adenosine(1518)/adenosine(1519) in 16S rRNA + 4 S-adenosyl-L-methionine = N(6)-dimethyladenosine(1518)/N(6)-dimethyladenosine(1519) in 16S rRNA + 4 S-adenosyl-L-homocysteine + 4 H(+). Functionally, specifically dimethylates two adjacent adenosines (A1518 and A1519) in the loop of a conserved hairpin near the 3'-end of 16S rRNA in the 30S particle. May play a critical role in biogenesis of 30S subunits. In Prochlorococcus marinus (strain MIT 9215), this protein is Ribosomal RNA small subunit methyltransferase A.